Consider the following 358-residue polypeptide: Ubiquitin thioesterase OTU1 (358 aa).

The region spanning 5-87 (FSVKLKSKKG…LIVEEKAGAA (83 aa)) is the Ubiquitin-like domain. A UBX-like region spans residues 8–94 (KLKSKKGQFI…GAAGPTSTPL (87 aa)). The segment at 83–108 (KAGAAGPTSTPLASGSGSSTMEDDEA) is disordered. Positions 89–102 (PTSTPLASGSGSST) are enriched in polar residues. An OTU domain is found at 161–285 (LLKKVVPADN…GIHYDPLYME (125 aa)). Residues 166 to 172 (VPADNSC) form a cys-loop region. The active site involves aspartate 169. Cysteine 172 (nucleophile) is an active-site residue. The interval 224–234 (IQKADSWGGAI) is variable-loop. The interval 274–278 (FDGIH) is his-loop. Isoleucine 277 provides a ligand contact to substrate. Histidine 278 is a catalytic residue. Positions 301 to 306 (MGVYQQ) are S2 site. The segment at 328-352 (LRCMDCDVMLVGQGQAQEHAKKTGH) adopts a C2H2-type zinc-finger fold. Histidine 352 is an active-site residue.

The catalysed reaction is Thiol-dependent hydrolysis of ester, thioester, amide, peptide and isopeptide bonds formed by the C-terminal Gly of ubiquitin (a 76-residue protein attached to proteins as an intracellular targeting signal).. Hydrolase that can remove conjugated ubiquitin from proteins and may therefore play an important regulatory role at the level of protein turnover by preventing degradation. The sequence is that of Ubiquitin thioesterase OTU1 from Drosophila pseudoobscura pseudoobscura (Fruit fly).